Consider the following 499-residue polypeptide: Putative antiporter subunit mnhD2 (499 aa).

Transmembrane regions (helical) follow at residues 3–23, 32–52, 78–98, 108–128, 130–150, 161–181, 206–226, 240–260, 273–293, 308–328, 330–350, 368–388, 403–423, and 450–470; these read SNLLVLPILLPLLCALVLVFT, ILYIGTMSVNTVISLCLLIYV, LSLVMVTVASFVVTLIMSYGF, YYLPTFILFLTTGVIGSFLTS, LFNLYVMFEIMLLASFVLVTL, IIYVVLNIVGSWLFLLGIGLL, IIIISIVFIVAFGSKAALVLF, LAALFAALMTKVGAYALIRFF, PLLVFMSCITMLIGAFGVIAY, IGFVILGLGSNTFAGVHGAIF, LANDIIVKTMLFFIIGSLVYM, FFGVAFVVMIFAIGGVPPFSG, GNFIGLALMIITSLLAMYSLF, and TILGILVAVVLAMGIAAPVVM.

The protein belongs to the CPA3 antiporters (TC 2.A.63) subunit D family. As to quaternary structure, may form a heterooligomeric complex that consists of seven subunits: mnhA2, mnhB2, mnhC2, mnhD2, mnhE2, mnhF2 and mnhG2.

It localises to the cell membrane. The chain is Putative antiporter subunit mnhD2 (mnhD2) from Staphylococcus haemolyticus (strain JCSC1435).